We begin with the raw amino-acid sequence, 612 residues long: Threonine--tRNA ligase (612 aa).

The segment at 218–509 (NHRKLGVELG…LSEHFGGNFP (292 aa)) is catalytic. Zn(2+) contacts are provided by cysteine 310, histidine 361, and histidine 486.

Belongs to the class-II aminoacyl-tRNA synthetase family. As to quaternary structure, homodimer. The cofactor is Zn(2+).

It is found in the cytoplasm. It catalyses the reaction tRNA(Thr) + L-threonine + ATP = L-threonyl-tRNA(Thr) + AMP + diphosphate + H(+). Its function is as follows. Catalyzes the attachment of threonine to tRNA(Thr) in a two-step reaction: L-threonine is first activated by ATP to form Thr-AMP and then transferred to the acceptor end of tRNA(Thr). Also edits incorrectly charged L-seryl-tRNA(Thr). The chain is Threonine--tRNA ligase from Helicobacter pylori (strain Shi470).